Consider the following 47-residue polypeptide: MRNKAHGFPHRISFDGEPDRAKHASKRANGTINTKPQERMHQANPDQ.

The interval 1-47 (MRNKAHGFPHRISFDGEPDRAKHASKRANGTINTKPQERMHQANPDQ) is disordered. Positions 12–22 (ISFDGEPDRAK) are enriched in basic and acidic residues.

This sequence belongs to the SspK family.

The protein localises to the spore core. This is Small, acid-soluble spore protein K from Halalkalibacterium halodurans (strain ATCC BAA-125 / DSM 18197 / FERM 7344 / JCM 9153 / C-125) (Bacillus halodurans).